The sequence spans 363 residues: Ferrochelatase (363 aa).

Positions 209 and 290 each coordinate Fe cation.

It belongs to the ferrochelatase family.

Its subcellular location is the cytoplasm. The catalysed reaction is heme b + 2 H(+) = protoporphyrin IX + Fe(2+). It functions in the pathway porphyrin-containing compound metabolism; protoheme biosynthesis; protoheme from protoporphyrin-IX: step 1/1. Catalyzes the ferrous insertion into protoporphyrin IX. This Azoarcus sp. (strain BH72) protein is Ferrochelatase.